The sequence spans 479 residues: Probable periplasmic serine endoprotease DegP-like (479 aa).

A signal peptide spans 1-27 (MSIPRMKSYFSLIAAVLMLGQVATAQA). The interval 77–99 (LERSMPPGSRPPGAGKGDRQRET) is disordered. Active-site charge relay system residues include His119, Asp149, and Ser222. Residues 220 to 222 (GNS) and 277 to 281 (LGVVI) contribute to the substrate site. PDZ domains are found at residues 266–357 (LKAS…IRDG) and 363–468 (TVTV…LRQG).

Belongs to the peptidase S1C family.

Its subcellular location is the periplasm. It carries out the reaction Acts on substrates that are at least partially unfolded. The cleavage site P1 residue is normally between a pair of hydrophobic residues, such as Val-|-Val.. Might be efficient in the degradation of transiently denatured and unfolded proteins which accumulate in the periplasm following stress conditions. This Pseudomonas savastanoi pv. phaseolicola (strain 1448A / Race 6) (Pseudomonas syringae pv. phaseolicola (strain 1448A / Race 6)) protein is Probable periplasmic serine endoprotease DegP-like (mucD).